We begin with the raw amino-acid sequence, 330 residues long: Putative protein N-methyltransferase FAM86B1 (330 aa).

S-adenosyl-L-methionine contacts are provided by residues Trp-139, Gly-165 to Gly-167, Trp-228, and Ala-247.

It belongs to the class I-like SAM-binding methyltransferase superfamily. EEF2KMT family.

The protein is Putative protein N-methyltransferase FAM86B1 of Homo sapiens (Human).